We begin with the raw amino-acid sequence, 185 residues long: Large ribosomal subunit protein uL15 (185 aa).

The tract at residues 1–51 is disordered; that stretch reads MDLSSLRPAAGAVKNKKRVGRGQGSGNGTTAGKGNKGQQARSGYQKPINEG. A compositionally biased stretch (gly residues) spans 21–35; that stretch reads RGQGSGNGTTAGKGN.

Belongs to the universal ribosomal protein uL15 family. Part of the 50S ribosomal subunit.

Functionally, binds to the 23S rRNA. This is Large ribosomal subunit protein uL15 from Chlorobium phaeobacteroides (strain DSM 266 / SMG 266 / 2430).